A 497-amino-acid polypeptide reads, in one-letter code: Glutamyl-tRNA(Gln) amidotransferase subunit A (497 aa).

Residues Lys91 and Ser166 each act as charge relay system in the active site. Positions 143 to 171 (SSTENSAYGPTHNPWDLERTAGGSGGGSS) are disordered. Ser190 (acyl-ester intermediate) is an active-site residue.

Belongs to the amidase family. GatA subfamily. Heterotrimer of A, B and C subunits.

It catalyses the reaction L-glutamyl-tRNA(Gln) + L-glutamine + ATP + H2O = L-glutaminyl-tRNA(Gln) + L-glutamate + ADP + phosphate + H(+). Allows the formation of correctly charged Gln-tRNA(Gln) through the transamidation of misacylated Glu-tRNA(Gln) in organisms which lack glutaminyl-tRNA synthetase. The reaction takes place in the presence of glutamine and ATP through an activated gamma-phospho-Glu-tRNA(Gln). This chain is Glutamyl-tRNA(Gln) amidotransferase subunit A, found in Corynebacterium glutamicum (strain R).